Consider the following 462-residue polypeptide: Zinc transporter zipt-7.2 (462 aa).

The chain crosses the membrane as a helical span at residues 2 to 22 (LVKSCIFLSFLAIAAYGQAHL). The disordered stretch occupies residues 39-134 (HHQGHGHAHG…HGHSHGAESA (96 aa)). Over residues 40–51 (HQGHGHAHGGHG) the composition is skewed to basic residues. Residues 65 to 74 (AAAAEAATAA) show a composition bias toward low complexity. Residues 75–94 (AHDHGHAHDHDHGHAHDHGH) show a composition bias toward basic and acidic residues. Basic residues predominate over residues 111–120 (HGHAHDHHGH). The segment covering 121–132 (SHEDHGHSHGAE) has biased composition (basic and acidic residues). The chain crosses the membrane as a helical span at residues 161–181 (AISATLLISAAPCFILMFIPI). Asn-184 carries N-linked (GlcNAc...) asparagine glycosylation. Residues 194–214 (VLLAFGSGGLLGDAFLHLIPH) traverse the membrane as a helical segment. Residues 219–239 (GDGHGHSHSHGHSHGGGGHSH) are disordered. Residues 244–264 (MSVGGWVLGGIIAFLTVEKLV) traverse the membrane as a helical segment. Residues 270–307 (EDGHGHSHGHSHGGEKKETKEKDSKDKVAKKEEKPEKD) form a disordered region. Residues 281-307 (HGGEKKETKEKDSKDKVAKKEEKPEKD) show a composition bias toward basic and acidic residues. N-linked (GlcNAc...) asparagine glycosylation is present at Asn-326. 3 helical membrane-spanning segments follow: residues 333–353 (IGAS…TVLV), 376–396 (AMLI…ISLF), and 410–430 (SWVL…SVIP). Asn-435 carries N-linked (GlcNAc...) asparagine glycosylation. Residues 441–461 (TVKEIFAILTGIFLMYLIAIY) traverse the membrane as a helical segment.

The protein belongs to the ZIP transporter (TC 2.A.5) family. KE4/Catsup subfamily. Expressed in somatic tissues.

Its subcellular location is the membrane. Functionally, zinc transporter. In Caenorhabditis elegans, this protein is Zinc transporter zipt-7.2.